The following is a 740-amino-acid chain: ATP-dependent RNA helicase DDX1 (740 aa).

Residues 1–295 form a necessary for interaction with HNRNPK region; the sequence is MAAFSEMGVM…APKALIVEPS (295 aa). Positions 1 to 448 are interaction with dsRNA; sequence MAAFSEMGVM…DTVHHVVVPV (448 aa). The interval 1-525 is necessary for interaction with RELA; that stretch reads MAAFSEMGVM…KIDCDNLEQY (525 aa). The 427-residue stretch at 2 to 428 folds into the Helicase ATP-binding domain; the sequence is AAFSEMGVMP…SEKIMHFPTW (427 aa). An ATP-binding site is contributed by 46–53; that stretch reads AETGSGKT. The B30.2/SPRY domain occupies 70 to 247; sequence DQQEGKKGKT…LKFNFGEEEF (178 aa). 2 positions are modified to N6-acetyllysine: K239 and K268. K281 is modified (N6-acetyllysine; alternate). Residue K281 forms a Glycyl lysine isopeptide (Lys-Gly) (interchain with G-Cter in SUMO2); alternate linkage. The DEAD box signature appears at 370–373; it reads DEAD. S481 bears the Phosphoserine mark. The Helicase C-terminal domain occupies 493-681; sequence KGEYAVRAIK…QVEPDIKVPV (189 aa). Positions 525-740 are necessary for interaction with HNRNPK; it reads YFMQQGGGPD…YLPNQLFRTF (216 aa).

The protein belongs to the DEAD box helicase family. DDX1 subfamily. As to quaternary structure, found in a multi-helicase-TICAM1 complex at least composed of DHX36, DDX1, DDX21 and TICAM1; this complex exists in resting cells with or without poly(I:C) RNA ligand stimulation. Interacts with DHX36. Interacts (via B30.2/SPRY domain) with DDX21 (via N-terminus); this interaction serves as bridges to TICAM1. Interacts with FAM98A (via N- and C-terminus). Interacts with MBNL1. Interacts with CSTF2. Interacts with HNRNPK. Interacts with ATM. Interacts with RELA (via C-terminus). Component of the tRNA-splicing ligase complex. Interacts with PHF5A (via C-terminus). Interacts with PQBP1. Interacts with ERCC6. Phosphorylated by ATM kinase; phosphorylation is increased in response to ionizing radiation (IR). Testis-specific. Expressed in the germ line stem cells, spermatogonia and spermatocytes of the testis. Also expressed in the seminoma and nonseminoma types of testicular germ cell tumors (TGCTs) (at protein level).

It is found in the nucleus. It localises to the cytoplasm. The protein resides in the cytosol. The protein localises to the cytoplasmic granule. Its subcellular location is the mitochondrion. The enzyme catalyses ATP + H2O = ADP + phosphate + H(+). Functionally, acts as an ATP-dependent RNA helicase, able to unwind both RNA-RNA and RNA-DNA duplexes. Possesses 5' single-stranded RNA overhang nuclease activity. Possesses ATPase activity on various RNA, but not DNA polynucleotides. May play a role in RNA clearance at DNA double-strand breaks (DSBs), thereby facilitating the template-guided repair of transcriptionally active regions of the genome. Together with RELA, acts as a coactivator to enhance NF-kappa-B-mediated transcriptional activation. Acts as a positive transcriptional regulator of cyclin CCND2 expression. Binds to the cyclin CCND2 promoter region. Associates with chromatin at the NF-kappa-B promoter region via association with RELA. Binds to poly(A) RNA. May be involved in 3'-end cleavage and polyadenylation of pre-mRNAs. Component of the tRNA-splicing ligase complex required to facilitate the enzymatic turnover of catalytic subunit RTCB: together with archease (ZBTB8OS), acts by facilitating the guanylylation of RTCB, a key intermediate step in tRNA ligation. Component of a multi-helicase-TICAM1 complex that acts as a cytoplasmic sensor of viral double-stranded RNA (dsRNA) and plays a role in the activation of a cascade of antiviral responses including the induction of pro-inflammatory cytokines via the adapter molecule TICAM1. Specifically binds (via helicase ATP-binding domain) on both short and long poly(I:C) dsRNA. The sequence is that of ATP-dependent RNA helicase DDX1 (Ddx1) from Mus musculus (Mouse).